Consider the following 60-residue polypeptide: Naniproin (60 aa).

Disulfide bonds link Cys-3-Cys-21, Cys-14-Cys-38, Cys-42-Cys-53, and Cys-54-Cys-59.

It belongs to the three-finger toxin family. Short-chain subfamily. Type IA cytotoxin sub-subfamily. As to quaternary structure, monomer in solution; Homodimer and oligomer in the presence of negatively charged lipids forming a pore with a size ranging between 20 and 30 angstroms. As to expression, expressed by the venom gland.

The protein localises to the secreted. The protein resides in the target cell membrane. Basic protein that binds to cell membrane and depolarizes cardiomyocytes. This cytotoxin also possesses lytic activity on many other cells, including red blood cells. Interaction with sulfatides in the cell membrane induces pore formation and cell internalization and is responsible for cytotoxicity in cardiomyocytes. It targets the mitochondrial membrane and induces mitochondrial swelling and fragmentation. Inhibits protein kinases C. It binds to the integrin alpha-V/beta-3 with a moderate affinity. In Naja nigricollis (Black-necked spitting cobra), this protein is Naniproin.